A 492-amino-acid chain; its full sequence is Probable endopolygalacturonase D (492 aa).

Positions M1 to G16 are cleaved as a signal peptide. A disulfide bridge connects residues C151 and C166. PbH1 repeat units follow at residues G216 to D238, M258 to S280, T281 to E319, and S320 to S341. N292 carries N-linked (GlcNAc...) asparagine glycosylation. The Proton donor role is filled by D334. C336 and C352 are joined by a disulfide. H356 is a catalytic residue. PbH1 repeat units follow at residues V371–T392, V400–Q422, and T434–G478. N-linked (GlcNAc...) asparagine glycosylation is found at N407 and N441. 2 disulfides stabilise this stretch: C461–C466 and C484–C491.

Belongs to the glycosyl hydrolase 28 family.

It is found in the secreted. It carries out the reaction (1,4-alpha-D-galacturonosyl)n+m + H2O = (1,4-alpha-D-galacturonosyl)n + (1,4-alpha-D-galacturonosyl)m.. Involved in maceration and soft-rotting of plant tissue. Hydrolyzes the 1,4-alpha glycosidic bonds of de-esterified pectate in the smooth region of the plant cell wall. This Aspergillus oryzae (strain ATCC 42149 / RIB 40) (Yellow koji mold) protein is Probable endopolygalacturonase D (pgaD).